Consider the following 110-residue polypeptide: UPF0122 protein YlxM (110 aa).

The protein belongs to the UPF0122 family.

Functionally, might take part in the signal recognition particle (SRP) pathway. This is inferred from the conservation of its genetic proximity to ftsY/ffh. May be a regulatory protein. The polypeptide is UPF0122 protein YlxM (ylxM) (Bacillus subtilis (strain 168)).